A 297-amino-acid chain; its full sequence is Developmental pluripotency-associated protein 4 (297 aa).

The segment at 1–77 (MEPSGSKKGR…KVPVPPFPQH (77 aa)) is disordered. Positions 23–34 (SSQPSTSSAKTK) are enriched in low complexity. Over residues 43–63 (SEKDDGCKPEEKSAQDPETPG) the composition is skewed to basic and acidic residues. Serine 211 is subject to Phosphoserine.

In terms of assembly, interacts with DPPA2. Interacts with PCGF1.

It localises to the nucleus. Functionally, may be involved in the maintenance of active epigenetic status of target genes. May inhibit differentiation of embryonic stem (ES) cells into a primitive ectoderm lineage. The protein is Developmental pluripotency-associated protein 4 (Dppa4) of Rattus norvegicus (Rat).